The primary structure comprises 228 residues: Ribonuclease 3 (228 aa).

One can recognise an RNase III domain in the interval 5 to 134; sequence RSKLEKDYGI…FLGALLLDKG (130 aa). Glutamate 47 contributes to the Mg(2+) binding site. Aspartate 51 is a catalytic residue. The Mg(2+) site is built by aspartate 120 and glutamate 123. Glutamate 123 is an active-site residue. Residues 160 to 228 form the DRBM domain; that stretch reads DYKTSLQELL…AAKNALATLQ (69 aa).

The protein belongs to the ribonuclease III family. As to quaternary structure, homodimer. Mg(2+) is required as a cofactor.

The protein resides in the cytoplasm. It catalyses the reaction Endonucleolytic cleavage to 5'-phosphomonoester.. Functionally, digests double-stranded RNA. Involved in the processing of primary rRNA transcript to yield the immediate precursors to the large and small rRNAs (23S and 16S). Processes some mRNAs, and tRNAs when they are encoded in the rRNA operon. Processes pre-crRNA and tracrRNA of type II CRISPR loci if present in the organism. The sequence is that of Ribonuclease 3 from Streptococcus agalactiae serotype III (strain NEM316).